The chain runs to 185 residues: Elongation factor P (185 aa).

This sequence belongs to the elongation factor P family.

The protein localises to the cytoplasm. It functions in the pathway protein biosynthesis; polypeptide chain elongation. Involved in peptide bond synthesis. Stimulates efficient translation and peptide-bond synthesis on native or reconstituted 70S ribosomes in vitro. Probably functions indirectly by altering the affinity of the ribosome for aminoacyl-tRNA, thus increasing their reactivity as acceptors for peptidyl transferase. This Mesomycoplasma hyopneumoniae (strain 232) (Mycoplasma hyopneumoniae) protein is Elongation factor P.